Here is a 222-residue protein sequence, read N- to C-terminus: MVKCCSAIGCASRCLPNSKLKGLTFHVFPTDENIKRKWVLAMKRLDVNAAGIWEPKKGDVLCSRHFKKTDFDRSAPNIKLKPGVIPSIFDSPYHLQGKREKLHCRKNFTLKTVPATNYNHHLVGASSCIEEFQSQFIFEHSYSVMDSPKKLKHKLDHVIGELEDTKESLRNVLDREKRFQKSLRKTIRELKDECLISQETANRLDTFCWDCCQESIEQDYIS.

A THAP-type zinc finger spans residues 1 to 89 (MVKCCSAIGC…LKPGVIPSIF (89 aa)). An HCFC1-binding motif (HBM) motif is present at residues 139 to 142 (EHSY). A coiled-coil region spans residues 149–194 (KKLKHKLDHVIGELEDTKESLRNVLDREKRFQKSLRKTIRELKDEC).

This Homo sapiens (Human) protein is THAP domain-containing protein 6 (THAP6).